A 1299-amino-acid polypeptide reads, in one-letter code: DNA-directed RNA polymerase subunit beta' (1299 aa).

Residues C60, C62, C75, and C78 each contribute to the Zn(2+) site. A disordered region spans residues G188–R209. Mg(2+) is bound by residues D535, D537, and D539. Positions 882, 959, 966, and 969 each coordinate Zn(2+).

Belongs to the RNA polymerase beta' chain family. In terms of assembly, the RNAP catalytic core consists of 2 alpha, 1 beta, 1 beta' and 1 omega subunit. When a sigma factor is associated with the core the holoenzyme is formed, which can initiate transcription. It depends on Mg(2+) as a cofactor. Requires Zn(2+) as cofactor.

The enzyme catalyses RNA(n) + a ribonucleoside 5'-triphosphate = RNA(n+1) + diphosphate. DNA-dependent RNA polymerase catalyzes the transcription of DNA into RNA using the four ribonucleoside triphosphates as substrates. In Clavibacter michiganensis subsp. michiganensis (strain NCPPB 382), this protein is DNA-directed RNA polymerase subunit beta'.